We begin with the raw amino-acid sequence, 282 residues long: Acetylglutamate kinase (282 aa).

Substrate-binding positions include 62–63, Arg-84, and Asn-178; that span reads GG. L-arginine-binding positions include Lys-196, Ser-214, and 266–269; that span reads EIFS.

Homohexamer.

The protein resides in the cytoplasm. The catalysed reaction is N-acetyl-L-glutamate + ATP = N-acetyl-L-glutamyl 5-phosphate + ADP. It participates in amino-acid biosynthesis; L-arginine biosynthesis; N(2)-acetyl-L-ornithine from L-glutamate: step 2/4. Allosterically inhibited by arginine. Functionally, catalyzes the ATP-dependent phosphorylation of N-acetyl-L-glutamate. The protein is Acetylglutamate kinase of Thermotoga maritima (strain ATCC 43589 / DSM 3109 / JCM 10099 / NBRC 100826 / MSB8).